We begin with the raw amino-acid sequence, 617 residues long: Sphingosine kinase 2 (617 aa).

The segment at 1–140 (MAPPPLLPVA…LSGDQEITPE (140 aa)) is required for binding to sulfatide and phosphoinositides and for membrane localization. Residues 87-95 (RGRRGGRRR) carry the Nuclear localization signal motif. In terms of domain architecture, DAGKc spans 143–290 (PRKPRLLILV…LDLLSVTLAS (148 aa)). Residues 153–155 (NPF) and 185–189 (TERQN) each bind ATP. Position 210–213 (210–213 (SGDG)) interacts with substrate. Asp212 acts as the Proton donor/acceptor in catalysis. Residues Glu217 and 242-244 (GSG) each bind ATP. Position 309 (Asp309) interacts with substrate. Residues Arg316 and Arg322 each coordinate ATP. A phosphoserine mark is found at Ser358 and Ser364. The disordered stretch occupies residues 371 to 472 (APAPAATHSP…GFLPPTHSAP (102 aa)). The residue at position 377 (Thr377) is a Phosphothreonine. The Nuclear export signal signature appears at 381–390 (LHRSVSDLPL). Residues Ser384 and Ser386 each carry the phosphoserine modification. A compositionally biased stretch (gly residues) spans 412-426 (NGGGPELTGDWGGAG). A Phosphothreonine modification is found at Thr578. 586–588 (DGE) serves as a coordination point for ATP.

Interacts with histone H3. Interacts with HDAC1, HDAC2, MBD2 and SIN3A. Interacts with EEF1A1; the interaction enhances SPHK2 kinase activity. Interacts with PHB2. It depends on Mg(2+) as a cofactor. Phosphorylated by PKD on Ser-384 and Ser-386 upon PMA treatment. Phosphorylation induces export from the nucleus to the cytoplasm. Phosphorylated by MAPK1 and MAPK2 at Thr-578, phosphorylation is induced by agonists such as EGF and PMA and increases kinase activity. In terms of processing, cleaved by CASP1 in apoptotic cells. The truncated form is released from cells. As to expression, expressed in heart, brain, liver, kidney and testis. Expressed by mast cells (at protein level). In the substantia nigra, expressed by dopaminergic neurons (at protein level).

The protein resides in the lysosome membrane. It localises to the cytoplasm. It is found in the cell membrane. Its subcellular location is the endoplasmic reticulum. The protein localises to the nucleus. The protein resides in the mitochondrion inner membrane. It carries out the reaction a sphingoid base + ATP = a sphingoid 1-phosphate + ADP + H(+). The enzyme catalyses sphing-4-enine + ATP = sphing-4-enine 1-phosphate + ADP + H(+). It catalyses the reaction sphinganine + ATP = sphinganine 1-phosphate + ADP + H(+). The catalysed reaction is (4R)-hydroxysphinganine + ATP = (4R)-hydroxysphinganine 1-phosphate + ADP + H(+). Catalyzes the phosphorylation of sphingosine to form sphingosine-1-phosphate (SPP), a lipid mediator with both intra- and extracellular functions. Also acts on D-erythro-dihydrosphingosine, D-erythro-sphingosine and L-threo-dihydrosphingosine. Binds phosphoinositides. In contrast to prosurvival SPHK1, has a positive effect on intracellular ceramide levels, inhibits cells growth and enhances apoptosis. In mitochondria, is important for cytochrome-c oxidase assembly and mitochondrial respiration. The SPP produced in mitochondria binds PHB2 and modulates the regulation via PHB2 of complex IV assembly and respiration. In nucleus, plays a role in epigenetic regulation of gene expression. Interacts with HDAC1 and HDAC2 and, through SPP production, inhibits their enzymatic activity, preventing the removal of acetyl groups from lysine residues with histones. Up-regulates acetylation of histone H3-K9, histone H4-K5 and histone H2B-K12. In nucleus, may have an inhibitory effect on DNA synthesis and cell cycle. In mast cells, is the main regulator of SPP production which mediates calcium influx, NF-kappa-B activation, cytokine production, such as TNF and IL6, and degranulation of mast cells. In dopaminergic neurons, is involved in promoting mitochondrial functions regulating ATP and ROS levels. Also involved in the regulation of glucose and lipid metabolism. This chain is Sphingosine kinase 2, found in Mus musculus (Mouse).